We begin with the raw amino-acid sequence, 255 residues long: Thiazole synthase (255 aa).

The Schiff-base intermediate with DXP role is filled by K96. 1-deoxy-D-xylulose 5-phosphate contacts are provided by residues G157, 183-184 (AG), and 205-206 (NT).

Belongs to the ThiG family. As to quaternary structure, homotetramer. Forms heterodimers with either ThiH or ThiS.

Its subcellular location is the cytoplasm. The enzyme catalyses [ThiS sulfur-carrier protein]-C-terminal-Gly-aminoethanethioate + 2-iminoacetate + 1-deoxy-D-xylulose 5-phosphate = [ThiS sulfur-carrier protein]-C-terminal Gly-Gly + 2-[(2R,5Z)-2-carboxy-4-methylthiazol-5(2H)-ylidene]ethyl phosphate + 2 H2O + H(+). It functions in the pathway cofactor biosynthesis; thiamine diphosphate biosynthesis. Catalyzes the rearrangement of 1-deoxy-D-xylulose 5-phosphate (DXP) to produce the thiazole phosphate moiety of thiamine. Sulfur is provided by the thiocarboxylate moiety of the carrier protein ThiS. In vitro, sulfur can be provided by H(2)S. This is Thiazole synthase from Bacillus pumilus (strain SAFR-032).